Here is an 892-residue protein sequence, read N- to C-terminus: Translation initiation factor IF-2 (892 aa).

Disordered stretches follow at residues 144-176 and 189-298; these read QQRL…QKTE and SNSV…SGAH. The segment covering 207–219 has biased composition (low complexity); it reads LPRTVRPTPAARP. One can recognise a tr-type G domain in the interval 391–560; the sequence is PRPPVVTIMG…SIQAEVLELK (170 aa). GTP contacts are provided by residues 400–407, 446–450, and 500–503; these read GHVDHGKT, DTPGH, and SKID.

The protein belongs to the TRAFAC class translation factor GTPase superfamily. Classic translation factor GTPase family. IF-2 subfamily.

The protein resides in the cytoplasm. Its function is as follows. One of the essential components for the initiation of protein synthesis. Protects formylmethionyl-tRNA from spontaneous hydrolysis and promotes its binding to the 30S ribosomal subunits. Also involved in the hydrolysis of GTP during the formation of the 70S ribosomal complex. In Xylella fastidiosa (strain M12), this protein is Translation initiation factor IF-2.